Here is a 334-residue protein sequence, read N- to C-terminus: Protein NlpD/LppB homolog (334 aa).

In terms of domain architecture, LysM spans 89–133; it reads IFYIVKSKDTMYSIAKNSGYNYHELSKFNSIKKPYKIIIGQKIWM.

Belongs to the E.coli NlpD/Haemophilus LppB family.

This Buchnera aphidicola subsp. Acyrthosiphon pisum (strain APS) (Acyrthosiphon pisum symbiotic bacterium) protein is Protein NlpD/LppB homolog.